Consider the following 135-residue polypeptide: Cofilin-4 (135 aa).

The ADF-H domain maps to 3–135 (SCASINDEVI…SQSLVEERCK (133 aa)).

This sequence belongs to the actin-binding proteins ADF family.

Its subcellular location is the cytoplasm. It is found in the cytoskeleton. Controls actin polymerization and depolymerization. This is Cofilin-4 (cofE) from Dictyostelium discoideum (Social amoeba).